The following is a 174-amino-acid chain: Fimbria A protein (174 aa).

The N-terminal stretch at 1–22 (MKLNKIMLATVLAFGVSSLANA) is a signal peptide. The cysteines at positions 41 and 80 are disulfide-linked.

Belongs to the fimbrial protein family.

It localises to the fimbrium. Major structural component of mannose-resistant fimbriae of Serratia marcescens. This is Fimbria A protein (smfA) from Serratia marcescens.